A 698-amino-acid chain; its full sequence is Protein no-on-transient A (698 aa).

Over residues 1 to 29 (MENSVKMDTSGNSTPLPQRQARANNQPNK) the composition is skewed to polar residues. Residues 1–247 (MENSVKMDTS…SGGGNNSQRG (247 aa)) form a disordered region. Over residues 61–86 (NGGGGSVGGGGGGGGGSGGGGGGGGQ) the composition is skewed to gly residues. Low complexity-rich tracts occupy residues 108–126 (RGGN…NQKS) and 145–197 (ANNA…QNQA). Composition is skewed to gly residues over residues 201–220 (RGGG…GGGG) and 228–242 (SRGG…GGGN). 2 RRM domains span residues 281–353 (NRLY…FAPN) and 355–441 (TILR…DDND). Residues 484–582 (DLFKSKQDAL…DMRRRQQENT (99 aa)) adopt a coiled-coil conformation. Disordered regions lie at residues 515–571 (QETE…VRQE) and 597–698 (QEGF…RRRF). Basic and acidic residues predominate over residues 518–561 (ELSRQELRKRESDNERKKLEWEMREKQAEEMRKREEETMRRHQT). Gly residues predominate over residues 599–623 (GFGGGNNGGGGGGGGGGGGVGGGVG). Low complexity-rich tracts occupy residues 624 to 636 (NSNF…NSNS) and 643 to 660 (GNNN…GANN).

Required for normal vision and courtship behavior in Drosophila. The sequence is that of Protein no-on-transient A (nonA) from Drosophila littoralis (Fruit fly).